The primary structure comprises 99 residues: Small integral membrane protein 14 (99 aa).

Over 1 to 49 the chain is Lumenal; that stretch reads MAEGGFDPCECVCSHEHAMRRLINLLRQSQSYCTDTECLQELPGPSGDN. A helical membrane pass occupies residues 50-70; sequence GISVTMILVAWMVIALILFLL. Over 71–99 the chain is Cytoplasmic; it reads RPPNLRGSNLPGKPTSPHNGQDPPAPPVD. Positions 77 to 99 are disordered; the sequence is GSNLPGKPTSPHNGQDPPAPPVD.

Its subcellular location is the endoplasmic reticulum membrane. The polypeptide is Small integral membrane protein 14 (SMIM14) (Pongo abelii (Sumatran orangutan)).